We begin with the raw amino-acid sequence, 511 residues long: Bifunctional purine biosynthesis protein PurH (511 aa).

Residues 1–145 (MKQRALVSVS…KNHKFVSVIV (145 aa)) form the MGS-like domain.

This sequence belongs to the PurH family.

It catalyses the reaction (6R)-10-formyltetrahydrofolate + 5-amino-1-(5-phospho-beta-D-ribosyl)imidazole-4-carboxamide = 5-formamido-1-(5-phospho-D-ribosyl)imidazole-4-carboxamide + (6S)-5,6,7,8-tetrahydrofolate. It carries out the reaction IMP + H2O = 5-formamido-1-(5-phospho-D-ribosyl)imidazole-4-carboxamide. Its pathway is purine metabolism; IMP biosynthesis via de novo pathway; 5-formamido-1-(5-phospho-D-ribosyl)imidazole-4-carboxamide from 5-amino-1-(5-phospho-D-ribosyl)imidazole-4-carboxamide (10-formyl THF route): step 1/1. It functions in the pathway purine metabolism; IMP biosynthesis via de novo pathway; IMP from 5-formamido-1-(5-phospho-D-ribosyl)imidazole-4-carboxamide: step 1/1. The protein is Bifunctional purine biosynthesis protein PurH of Bacillus cereus (strain AH187).